The sequence spans 375 residues: Transcription factor E2F4 (375 aa).

A DNA-binding region spans residues 12-81; the sequence is SRHEKSLGLL…KNSIQWKGVG (70 aa). The segment at 39–61 is leucine-zipper; it reads LKAAADTLAVRQKRRIYDITNVL. A DEF box motif is present at residues 44-81; the sequence is DTLAVRQKRRIYDITNVLEGIGLIEKKSKNSIQWKGVG. The dimerization stretch occupies residues 82-177; that stretch reads PGCNTREIAD…NTNGQKKFQI (96 aa). The segment at 197-300 is disordered; it reads SSAPVVVPVP…PDPSTSFQPI (104 aa). Residues 220–270 show a composition bias toward polar residues; that stretch reads STPQRPALTPQNDIATSPAPTVPHSTISNAESQDCPTGQTFSMENTTSSRL. Low complexity predominate over residues 280 to 296; that stretch reads SSASLDNSNDSPDPSTS. Residues 299–375 are transactivation; that stretch reads PIKSDLSDVL…CDLFDVPINL (77 aa).

It belongs to the E2F/DP family. As to quaternary structure, component of the drtf1/e2f transcription factor complex. Component of the EDM complex, at least composed of e2f4, e2f5, mcidas and tfdp1.

Its subcellular location is the nucleus. Its function is as follows. Transcription activator that binds DNA cooperatively with DP proteins through the E2 recognition site, 5'-TTTC[CG]CGC-3' found in the promoter region of a number of genes. Component of the EDM complex, a complex specifically required for multiciliate cell differentiation: the EDM complex binds and activate genes required for centriole biogenesis. Activates genes required for centriole assembly (plk4, cep152) and genes specifically required for motile cilia formation (foxj1). Also promotes the deuterosome pathway of centriole biogenesis by activating expression of deup1, but not its paralog cep63. This is Transcription factor E2F4 from Xenopus laevis (African clawed frog).